A 454-amino-acid polypeptide reads, in one-letter code: Tubulin beta-2 chain (454 aa).

Residues Gln11, Glu69, Ser138, Gly142, Thr143, Gly144, Asn204, and Asn226 each coordinate GTP. Glu69 lines the Mg(2+) pocket. Residues 426–454 form a disordered region; sequence QEASVDDEAMEDDAEAEGGAGQNEAVEEF. The segment covering 429–441 has biased composition (acidic residues); sequence SVDDEAMEDDAEA.

Belongs to the tubulin family. As to quaternary structure, dimer of alpha and beta chains. A typical microtubule is a hollow water-filled tube with an outer diameter of 25 nm and an inner diameter of 15 nM. Alpha-beta heterodimers associate head-to-tail to form protofilaments running lengthwise along the microtubule wall with the beta-tubulin subunit facing the microtubule plus end conferring a structural polarity. Microtubules usually have 13 protofilaments but different protofilament numbers can be found in some organisms and specialized cells. The cofactor is Mg(2+).

It is found in the cytoplasm. Its subcellular location is the cytoskeleton. The protein resides in the spindle. It localises to the nucleus. Its function is as follows. Tubulin is the major constituent of microtubules, a cylinder consisting of laterally associated linear protofilaments composed of alpha- and beta-tubulin heterodimers. Microtubules grow by the addition of GTP-tubulin dimers to the microtubule end, where a stabilizing cap forms. Below the cap, tubulin dimers are in GDP-bound state, owing to GTPase activity of alpha-tubulin. This is the major beta tubulin of mitotic spindle. This chain is Tubulin beta-2 chain (BETC), found in Physarum polycephalum (Slime mold).